The chain runs to 560 residues: DNA ligase B (560 aa).

The N6-AMP-lysine intermediate role is filled by Lys124.

The protein belongs to the NAD-dependent DNA ligase family. LigB subfamily.

The enzyme catalyses NAD(+) + (deoxyribonucleotide)n-3'-hydroxyl + 5'-phospho-(deoxyribonucleotide)m = (deoxyribonucleotide)n+m + AMP + beta-nicotinamide D-nucleotide.. Functionally, catalyzes the formation of phosphodiester linkages between 5'-phosphoryl and 3'-hydroxyl groups in double-stranded DNA using NAD as a coenzyme and as the energy source for the reaction. The chain is DNA ligase B from Escherichia coli (strain SMS-3-5 / SECEC).